Reading from the N-terminus, the 160-residue chain is CST complex subunit STN1 (160 aa).

A DNA-binding region (OB) is located at residues 41–133 (VEIVGTIVSR…QITANVAVAE (93 aa)).

The protein belongs to the STN1 family. In terms of assembly, component of the CST complex, composed of CTC1, TEN1 and STN1. Interacts with CTC1. Interacts with TEN1. Interacts with POT1A. In vitro interaction with TEN1 and POT1A is mutually exclusive, indicating that POT1A and TEN1 may compete for the same binding site. Widely expressed.

The protein localises to the nucleus. It is found in the chromosome. It localises to the telomere. Functionally, component of the CST complex, a complex that binds to single-stranded DNA and is required to protect telomeres from DNA degradation. The CST complex binds single-stranded DNA with high affinity in a sequence-independent manner, while isolated subunits bind DNA with low affinity by themselves. Associates with enzymatically active telomerase. Plays a genomewide role in DNA replication and facilitates re-replication at non-telomeric loci. This Arabidopsis thaliana (Mouse-ear cress) protein is CST complex subunit STN1.